An 886-amino-acid chain; its full sequence is Phosphatidylinositol 3-kinase catalytic subunit type 3 (886 aa).

The region spanning 35–184 is the C2 PI3K-type domain; that stretch reads YKAVLEDPML…LAKLTKAHRQ (150 aa). Residues 283–519 form the PIK helical domain; that stretch reads DHDLKPNAAT…PKTHEMYLNV (237 aa). A disordered region spans residues 414–464; that stretch reads GLEPTKKDSQGPMLESMTTSGINPETDSSQILSNPLPAVSSPAPPSKTKDG. The segment covering 429-444 has biased composition (polar residues); that stretch reads SMTTSGINPETDSSQI. The segment covering 445–454 has biased composition (low complexity); sequence LSNPLPAVSS. The PI3K/PI4K catalytic domain occupies 604-870; that stretch reads IPEKATLFKS…LIDDSVNALF (267 aa). Residues 610–616 form a G-loop region; sequence LFKSALM. The tract at residues 739-747 is catalytic loop; it reads GVGDRHLDN. The interval 758 to 779 is activation loop; it reads HIDFGYILGRDPKPLPPPMKLN.

The protein belongs to the PI3/PI4-kinase family. As to quaternary structure, component of the PI3K (PI3KC3/PI3K-III/class III phosphatidylinositol 3-kinase) complex the core of which is composed of the catalytic subunit pik3c3, the regulatory subunit pik3r4 and becn1 associating with additional regulatory/auxiliary subunits to form alternative complex forms. The cofactor is Mn(2+).

The protein resides in the midbody. The catalysed reaction is a 1,2-diacyl-sn-glycero-3-phospho-(1D-myo-inositol) + ATP = a 1,2-diacyl-sn-glycero-3-phospho-(1D-myo-inositol-3-phosphate) + ADP + H(+). In terms of biological role, catalytic subunit of the PI3K complex that mediates formation of phosphatidylinositol 3-phosphate; different complex forms are believed to play a role in multiple membrane trafficking pathways. Involved in the transport of lysosomal enzyme precursors to lysosomes. Required for transport from early to late endosomes. In Xenopus laevis (African clawed frog), this protein is Phosphatidylinositol 3-kinase catalytic subunit type 3 (pik3c3).